The following is a 466-amino-acid chain: Bifunctional NAD(P)H-hydrate repair enzyme Nnr (466 aa).

An NAD(P)H-hydrate epimerase region spans residues 1-207 (MLSVYEKVNA…HLGVFNQIYE (207 aa)). In terms of domain architecture, YjeF N-terminal spans 8-207 (VNALDKRAIE…HLGVFNQIYE (200 aa)). The segment at 56-60 (DNGGD) is NADPHX 1; for epimerase activity. K(+) is bound by residues Asn57 and Asp120. Residues 124–130 (GSHFKGK) form an NADPHX 1; for epimerase activity region. Asp151 is a binding site for (6S)-NADPHX. A K(+)-binding site is contributed by Ser154. A YjeF C-terminal domain is found at 215 to 466 (LEKSDLKLPL…LDLIEKIKQL (252 aa)). The ADP-dependent (S)-NAD(P)H-hydrate dehydratase stretch occupies residues 215 to 466 (LEKSDLKLPL…LDLIEKIKQL (252 aa)). Gly300 contacts (6S)-NADPHX. An NADPHX 2; for dehydratase activity region spans residues 342–348 (HPKEFLS). ADP-binding positions include 385 to 389 (KGANT) and 404 to 413 (SVALAKAGSG). Asp414 is a binding site for (6S)-NADPHX.

This sequence in the N-terminal section; belongs to the NnrE/AIBP family. The protein in the C-terminal section; belongs to the NnrD/CARKD family. The cofactor is K(+).

The enzyme catalyses (6S)-NADHX + ADP = AMP + phosphate + NADH + H(+). The catalysed reaction is (6S)-NADPHX + ADP = AMP + phosphate + NADPH + H(+). It carries out the reaction (6R)-NADHX = (6S)-NADHX. It catalyses the reaction (6R)-NADPHX = (6S)-NADPHX. Functionally, bifunctional enzyme that catalyzes the epimerization of the S- and R-forms of NAD(P)HX and the dehydration of the S-form of NAD(P)HX at the expense of ADP, which is converted to AMP. This allows the repair of both epimers of NAD(P)HX, a damaged form of NAD(P)H that is a result of enzymatic or heat-dependent hydration. The sequence is that of Bifunctional NAD(P)H-hydrate repair enzyme Nnr (nnr) from Helicobacter pylori (strain ATCC 700392 / 26695) (Campylobacter pylori).